A 207-amino-acid polypeptide reads, in one-letter code: Ribosome maturation factor RimP (207 aa).

It belongs to the RimP family.

The protein resides in the cytoplasm. Required for maturation of 30S ribosomal subunits. This chain is Ribosome maturation factor RimP, found in Parvibaculum lavamentivorans (strain DS-1 / DSM 13023 / NCIMB 13966).